Here is a 668-residue protein sequence, read N- to C-terminus: Probable potassium transport system protein Kup (668 aa).

Transmembrane regions (helical) follow at residues 17 to 37 (GILV…LYVM), 59 to 79 (VSLI…VIAL), 104 to 124 (IIPA…TPAV), 148 to 168 (TIIV…QRFG), 175 to 195 (AFGP…LMNF), 221 to 241 (LGLF…ALYS), 256 to 276 (PYIK…LLTV), 299 to 319 (ILVF…QALI), 350 to 370 (MYIP…VLAF), 380 to 400 (YGLS…FYLL), 403 to 423 (IPAW…VVFF), and 430 to 450 (FFHG…IMII).

It belongs to the HAK/KUP transporter (TC 2.A.72) family.

It is found in the cell membrane. It carries out the reaction K(+)(in) + H(+)(in) = K(+)(out) + H(+)(out). Functionally, transport of potassium into the cell. Likely operates as a K(+):H(+) symporter. The chain is Probable potassium transport system protein Kup from Enterococcus faecalis (strain ATCC 700802 / V583).